We begin with the raw amino-acid sequence, 96 residues long: Protein RnfH (96 aa).

The protein belongs to the UPF0125 (RnfH) family.

This Escherichia coli O17:K52:H18 (strain UMN026 / ExPEC) protein is Protein RnfH.